The following is a 406-amino-acid chain: Cysteine desulfurase (406 aa).

Residue Lys-226 is modified to N6-(pyridoxal phosphate)lysine. The active-site Cysteine persulfide intermediate is Cys-364.

This sequence belongs to the class-V pyridoxal-phosphate-dependent aminotransferase family. Csd subfamily. Homodimer. Interacts with SufE and the SufBCD complex composed of SufB, SufC and SufD. The interaction with SufE is required to mediate the direct transfer of the sulfur atom from the S-sulfanylcysteine. Pyridoxal 5'-phosphate serves as cofactor.

The protein localises to the cytoplasm. It catalyses the reaction (sulfur carrier)-H + L-cysteine = (sulfur carrier)-SH + L-alanine. The enzyme catalyses L-selenocysteine + AH2 = hydrogenselenide + L-alanine + A + H(+). It participates in cofactor biosynthesis; iron-sulfur cluster biosynthesis. Functionally, cysteine desulfurases mobilize the sulfur from L-cysteine to yield L-alanine, an essential step in sulfur metabolism for biosynthesis of a variety of sulfur-containing biomolecules. Component of the suf operon, which is activated and required under specific conditions such as oxidative stress and iron limitation. Acts as a potent selenocysteine lyase in vitro, that mobilizes selenium from L-selenocysteine. Selenocysteine lyase activity is however unsure in vivo. The polypeptide is Cysteine desulfurase (Escherichia coli O6:K15:H31 (strain 536 / UPEC)).